Here is a 581-residue protein sequence, read N- to C-terminus: Prolactin receptor (581 aa).

A signal peptide spans Met-1 to Gly-24. Over Gln-25 to Asp-234 the chain is Extracellular. Fibronectin type-III domains are found at residues Pro-27–Pro-127 and Pro-129–Asp-229. Cys-36 and Cys-46 form a disulfide bridge. An N-linked (GlcNAc...) asparagine glycan is attached at Asn-59. A disulfide bond links Cys-75 and Cys-86. Asn-132 carries an N-linked (GlcNAc...) asparagine glycan. Positions 211 and 212 each coordinate Zn(2+). The WSXWS motif signature appears at Trp-215–Ser-219. Asn-233 carries N-linked (GlcNAc...) asparagine glycosylation. The chain crosses the membrane as a helical span at residues Thr-235 to Leu-258. Over Lys-259–Pro-581 the chain is Cytoplasmic. The Box 1 motif signature appears at Ile-267–Lys-275. Disordered stretches follow at residues Glu-321 to Glu-362 and Leu-462 to Thr-502. Basic and acidic residues predominate over residues Pro-329–Ser-349.

It belongs to the type I cytokine receptor family. Type 1 subfamily. As to quaternary structure, interacts with SMARCA1. Interacts with NEK3 and VAV2 and this interaction is prolactin-dependent.

The protein localises to the membrane. This is a receptor for the anterior pituitary hormone prolactin. The protein is Prolactin receptor (PRLR) of Cervus elaphus (Red deer).